Consider the following 433-residue polypeptide: ATP-dependent RNA helicase SUB2 (433 aa).

The short motif at 49-77 (TGFRDFLLKPELLRAIGDCGFEHPSEVQQ) is the Q motif element. One can recognise a Helicase ATP-binding domain in the interval 80–255 (IPQSILGTDV…KKFMQNPLEI (176 aa)). 93-100 (AKSGLGKT) serves as a coordination point for ATP. A DEAD box motif is present at residues 202-205 (DECD). The Helicase C-terminal domain maps to 267-428 (GLQQYYIKLE…EFPEEGVDPS (162 aa)).

It belongs to the DEAD box helicase family. DECD subfamily.

Its subcellular location is the nucleus. It catalyses the reaction ATP + H2O = ADP + phosphate + H(+). Its function is as follows. ATP-binding RNA helicase involved in transcription elongation and required for the export of mRNA out of the nucleus. SUB2 also plays a role in pre-mRNA splicing and spliceosome assembly. May be involved in rDNA and telomeric silencing, and maintenance of genome integrity. This chain is ATP-dependent RNA helicase SUB2 (SUB2), found in Scheffersomyces stipitis (strain ATCC 58785 / CBS 6054 / NBRC 10063 / NRRL Y-11545) (Yeast).